A 93-amino-acid chain; its full sequence is UPF0298 protein lwe2074 (93 aa).

This sequence belongs to the UPF0298 family.

Its subcellular location is the cytoplasm. This chain is UPF0298 protein lwe2074, found in Listeria welshimeri serovar 6b (strain ATCC 35897 / DSM 20650 / CCUG 15529 / CIP 8149 / NCTC 11857 / SLCC 5334 / V8).